A 241-amino-acid polypeptide reads, in one-letter code: Glucosamine-6-phosphate deaminase (241 aa).

Asp67 serves as the catalytic Proton acceptor; for enolization step. Asn136 functions as the For ring-opening step in the catalytic mechanism. His138 (proton acceptor; for ring-opening step) is an active-site residue. Glu143 acts as the For ring-opening step in catalysis.

It belongs to the glucosamine/galactosamine-6-phosphate isomerase family. NagB subfamily.

The enzyme catalyses alpha-D-glucosamine 6-phosphate + H2O = beta-D-fructose 6-phosphate + NH4(+). It functions in the pathway amino-sugar metabolism; N-acetylneuraminate degradation; D-fructose 6-phosphate from N-acetylneuraminate: step 5/5. In terms of biological role, catalyzes the reversible isomerization-deamination of glucosamine 6-phosphate (GlcN6P) to form fructose 6-phosphate (Fru6P) and ammonium ion. This is Glucosamine-6-phosphate deaminase from Alkaliphilus oremlandii (strain OhILAs) (Clostridium oremlandii (strain OhILAs)).